A 276-amino-acid chain; its full sequence is NH(3)-dependent NAD(+) synthetase (276 aa).

Glycine 43 to serine 50 serves as a coordination point for ATP. Aspartate 49 provides a ligand contact to Mg(2+). Arginine 146 lines the deamido-NAD(+) pocket. Threonine 166 contacts ATP. Residue glutamate 171 coordinates Mg(2+). Residues lysine 179 and aspartate 186 each coordinate deamido-NAD(+). ATP-binding residues include lysine 195 and threonine 217. Histidine 266 to lysine 267 provides a ligand contact to deamido-NAD(+).

Belongs to the NAD synthetase family. As to quaternary structure, homodimer.

It carries out the reaction deamido-NAD(+) + NH4(+) + ATP = AMP + diphosphate + NAD(+) + H(+). The protein operates within cofactor biosynthesis; NAD(+) biosynthesis; NAD(+) from deamido-NAD(+) (ammonia route): step 1/1. Functionally, catalyzes the ATP-dependent amidation of deamido-NAD to form NAD. Uses ammonia as a nitrogen source. This is NH(3)-dependent NAD(+) synthetase from Vibrio vulnificus (strain YJ016).